The following is a 47-amino-acid chain: LLGRCKVKSNRFHGPCLTDTHCSTVCRGEGYKGGDCHGLRRRCMCLC.

4 cysteine pairs are disulfide-bonded: C5-C47, C16-C36, C22-C43, and C26-C45.

The protein belongs to the DEFL family.

Its function is as follows. Fabatins have antibacterial activity against Gram-positive and Gram-negative bacteria. High activity against P.aeruginosa. No activity against S.cerevisiae and C.albicans. In Vicia faba (Broad bean), this protein is Defensin-like protein 1.